Here is a 199-residue protein sequence, read N- to C-terminus: MYETYHSGWIECITGSMFSGKSEELIRRLRRGIYAKQKVVVFKPAIDDRYHKEKVVSHDGNELEAINISTSRDILLQDLSHVDVIGIDEIQFFDKEIVNIVEKLAENGHRVVVAGLDMDFRGEPFEPMPQIMAVSEQVTKLQAVCAVCGSSSSRTQRLIDGQPAKVDDPIILVGANESYEPRCRAHHIVAPSTSDEEEM.

Residues 15–22 (GSMFSGKS) and 88–91 (DEIQ) each bind ATP. The active-site Proton acceptor is glutamate 89. 4 residues coordinate Zn(2+): cysteine 145, cysteine 148, cysteine 183, and histidine 186.

The protein belongs to the thymidine kinase family. Homotetramer.

It localises to the cytoplasm. It carries out the reaction thymidine + ATP = dTMP + ADP + H(+). In Staphylococcus haemolyticus (strain JCSC1435), this protein is Thymidine kinase.